A 364-amino-acid polypeptide reads, in one-letter code: Aminomethyltransferase (364 aa).

This sequence belongs to the GcvT family. As to quaternary structure, the glycine cleavage system is composed of four proteins: P, T, L and H.

The catalysed reaction is N(6)-[(R)-S(8)-aminomethyldihydrolipoyl]-L-lysyl-[protein] + (6S)-5,6,7,8-tetrahydrofolate = N(6)-[(R)-dihydrolipoyl]-L-lysyl-[protein] + (6R)-5,10-methylene-5,6,7,8-tetrahydrofolate + NH4(+). Its function is as follows. The glycine cleavage system catalyzes the degradation of glycine. In Escherichia coli O17:K52:H18 (strain UMN026 / ExPEC), this protein is Aminomethyltransferase.